The chain runs to 209 residues: Casparian strip membrane protein 1 (209 aa).

Topologically, residues 1 to 46 (MEKSESTKIDVVETNKERKGKAPLLGKAPVVAAAVVHAKGGGAKRG) are cytoplasmic. Residues 47–67 (IAIFDLILRIAAFASALGAAV) traverse the membrane as a helical segment. Topologically, residues 68-96 (AMATTEETLPFFTQFFQFEASYDDLPTFT) are extracellular. The helical transmembrane segment at 97–117 (FFVVAMAIVVAYLVLSVPFSI) threads the bilayer. The Cytoplasmic portion of the chain corresponds to 118–129 (VCIVRPHAVVPR). A helical transmembrane segment spans residues 130–150 (LLLIIFDTVIIALTTGAAGSS). Over 151 to 179 (AAIVYLAHNGNQDANWLAICQQFGDFCQR) the chain is Extracellular. Residues 180 to 200 (VSGAVVAAFVTVVILIFLVVL) form a helical membrane-spanning segment. Over 201-209 (SASALRRHH) the chain is Cytoplasmic.

Belongs to the Casparian strip membrane proteins (CASP) family. As to quaternary structure, homodimer and heterodimers.

Its subcellular location is the cell membrane. Its function is as follows. Regulates membrane-cell wall junctions and localized cell wall deposition. Required for establishment of the Casparian strip membrane domain (CSD) and the subsequent formation of Casparian strips, a cell wall modification of the root endodermis that determines an apoplastic barrier between the intraorganismal apoplasm and the extraorganismal apoplasm and prevents lateral diffusion. This Nicotiana tabacum (Common tobacco) protein is Casparian strip membrane protein 1.